We begin with the raw amino-acid sequence, 294 residues long: MKTKIIVIVGPTAVGKTALSIEVAKAFNGQIISGDSQQVYRGLNIGTAKIRPEEQEGISHYLLDVRDVGESYSAYDFVTEATQAIREIEAQGQLPIICGGTGLYIQSLLEGYHLGGSVPHEEILAYRAQLDSWSDEDLFGKIAELGIEIPQINRRRAMRALEIAHLGGQLENNLPDYEALLICLDDKREKLYERINQRVDLMIEDGLLEEARWLFDKAPTSQASKGIGYKELFPYFAGQVSLEEAVDKLKQNTRRFAKRQLTWFRNRMSVTFYQVGNPDYKNQVMEDIKNFLDK.

Position 10–17 (10–17 (GPTAVGKT)) interacts with ATP. 12–17 (TAVGKT) provides a ligand contact to substrate. The tract at residues 35-38 (DSQQ) is interaction with substrate tRNA.

Belongs to the IPP transferase family. As to quaternary structure, monomer. It depends on Mg(2+) as a cofactor.

It catalyses the reaction adenosine(37) in tRNA + dimethylallyl diphosphate = N(6)-dimethylallyladenosine(37) in tRNA + diphosphate. Its function is as follows. Catalyzes the transfer of a dimethylallyl group onto the adenine at position 37 in tRNAs that read codons beginning with uridine, leading to the formation of N6-(dimethylallyl)adenosine (i(6)A). The protein is tRNA dimethylallyltransferase of Streptococcus gordonii (strain Challis / ATCC 35105 / BCRC 15272 / CH1 / DL1 / V288).